A 142-amino-acid polypeptide reads, in one-letter code: Thioredoxin-like protein YLS8 (142 aa).

It belongs to the DIM1 family. As to expression, expressed in roots, leaves, stems, cauline leaves and flowers.

In Arabidopsis thaliana (Mouse-ear cress), this protein is Thioredoxin-like protein YLS8 (YLS8).